A 208-amino-acid chain; its full sequence is Uracil phosphoribosyltransferase (208 aa).

Residues R78, R103, and 130–138 (DPMLATGGS) contribute to the 5-phospho-alpha-D-ribose 1-diphosphate site. Uracil contacts are provided by residues I193 and 198-200 (GDA). Residue D199 participates in 5-phospho-alpha-D-ribose 1-diphosphate binding.

Belongs to the UPRTase family. The cofactor is Mg(2+).

The enzyme catalyses UMP + diphosphate = 5-phospho-alpha-D-ribose 1-diphosphate + uracil. It functions in the pathway pyrimidine metabolism; UMP biosynthesis via salvage pathway; UMP from uracil: step 1/1. Its activity is regulated as follows. Allosterically activated by GTP. Catalyzes the conversion of uracil and 5-phospho-alpha-D-ribose 1-diphosphate (PRPP) to UMP and diphosphate. In Shewanella denitrificans (strain OS217 / ATCC BAA-1090 / DSM 15013), this protein is Uracil phosphoribosyltransferase.